A 158-amino-acid chain; its full sequence is Small ribosomal subunit protein uS9 (158 aa).

It belongs to the universal ribosomal protein uS9 family.

This Nitrobacter winogradskyi (strain ATCC 25391 / DSM 10237 / CIP 104748 / NCIMB 11846 / Nb-255) protein is Small ribosomal subunit protein uS9.